A 585-amino-acid chain; its full sequence is Serine protease HtrA-like (585 aa).

A disordered region spans residues 1-184; it reads MDNNKKQVIP…QPKDKDNDNT (184 aa). A compositionally biased stretch (basic and acidic residues) spans 21-82; sequence YFHNVEREER…IHQQRDDKSY (62 aa). Residues 84–94 are compositionally biased toward polar residues; the sequence is QKTLNQNNQMN. Residues 95 to 113 show a composition bias toward basic and acidic residues; it reads KSKDDDNKIGEESLHDVRV. Over residues 114-124 the composition is skewed to polar residues; sequence SSDTSTLPHQN. The segment covering 126-139 has biased composition (basic and acidic residues); the sequence is SIKDYDDSGNESKQ. Positions 151–175 are enriched in polar residues; the sequence is GVNSNHTEQDSRSTQPYSSKHSYSQ. The chain crosses the membrane as a helical span at residues 224–244; sequence MLIIIGIIVLLLILNAIFTTV. Active-site charge relay system residues include His320, Asp350, and Ser435. Residues 516–575 form the PDZ domain; the sequence is GVLIGEVKENGLGDKAGLKKGDVIVELDGKKIEDNLRYRQVIYSHYDDQKTITAKIYRNG.

Belongs to the peptidase S1C family.

It is found in the cell membrane. This Staphylococcus epidermidis (strain ATCC 35984 / DSM 28319 / BCRC 17069 / CCUG 31568 / BM 3577 / RP62A) protein is Serine protease HtrA-like.